The chain runs to 503 residues: Glycerol kinase (503 aa).

ADP is bound at residue threonine 17. 3 residues coordinate ATP: threonine 17, threonine 18, and serine 19. Threonine 17 serves as a coordination point for sn-glycerol 3-phosphate. Arginine 21 lines the ADP pocket. Sn-glycerol 3-phosphate is bound by residues arginine 87, glutamate 88, tyrosine 141, and aspartate 245. Positions 87, 88, 141, 245, and 246 each coordinate glycerol. Residues threonine 267 and glycine 310 each coordinate ADP. ATP contacts are provided by threonine 267, glycine 310, glutamine 314, and glycine 411. 2 residues coordinate ADP: glycine 411 and asparagine 415.

This sequence belongs to the FGGY kinase family.

The catalysed reaction is glycerol + ATP = sn-glycerol 3-phosphate + ADP + H(+). It functions in the pathway polyol metabolism; glycerol degradation via glycerol kinase pathway; sn-glycerol 3-phosphate from glycerol: step 1/1. Its activity is regulated as follows. Inhibited by fructose 1,6-bisphosphate (FBP). Key enzyme in the regulation of glycerol uptake and metabolism. Catalyzes the phosphorylation of glycerol to yield sn-glycerol 3-phosphate. This Pseudomonas tolaasii protein is Glycerol kinase.